The following is a 452-amino-acid chain: Phosphoglucosamine mutase (452 aa).

Ser108 (phosphoserine intermediate) is an active-site residue. Mg(2+) contacts are provided by Ser108, Asp247, Asp249, and Asp251. Position 108 is a phosphoserine (Ser108).

This sequence belongs to the phosphohexose mutase family. It depends on Mg(2+) as a cofactor. Activated by phosphorylation.

The enzyme catalyses alpha-D-glucosamine 1-phosphate = D-glucosamine 6-phosphate. Functionally, catalyzes the conversion of glucosamine-6-phosphate to glucosamine-1-phosphate. The polypeptide is Phosphoglucosamine mutase (Burkholderia thailandensis (strain ATCC 700388 / DSM 13276 / CCUG 48851 / CIP 106301 / E264)).